The sequence spans 190 residues: Xanthine phosphoribosyltransferase (190 aa).

The xanthine site is built by leucine 20 and asparagine 27. 128 to 132 contributes to the 5-phospho-alpha-D-ribose 1-diphosphate binding site; that stretch reads ANGKA. A xanthine-binding site is contributed by lysine 156.

This sequence belongs to the purine/pyrimidine phosphoribosyltransferase family. Xpt subfamily. Homodimer.

Its subcellular location is the cytoplasm. The enzyme catalyses XMP + diphosphate = xanthine + 5-phospho-alpha-D-ribose 1-diphosphate. The protein operates within purine metabolism; XMP biosynthesis via salvage pathway; XMP from xanthine: step 1/1. In terms of biological role, converts the preformed base xanthine, a product of nucleic acid breakdown, to xanthosine 5'-monophosphate (XMP), so it can be reused for RNA or DNA synthesis. This is Xanthine phosphoribosyltransferase from Stutzerimonas stutzeri (strain A1501) (Pseudomonas stutzeri).